We begin with the raw amino-acid sequence, 238 residues long: Aspirochlorine biosynthesis protein N (238 aa).

The protein belongs to the asaB hydroxylase/desaturase family.

Its pathway is mycotoxin biosynthesis. Part of the gene cluster that mediates the biosynthesis of aspirochlorine (or antibiotic A30641), an unusual halogenated spiro compound with distinctive antifungal properties due to selective inhibition of protein biosynthesis, and which is also active against bacteria, viruses, and murine tumor cells. The non-ribosomal peptide synthetase (NRPS) aclP is responsible the formation of the diketopiperazine (DKP) core from the condensation of 2 phenylalanine residues. One Phe residue is tailored into chlorotyrosine by hydroxylation and chlorination, whereas the second Phe undergoes an unprecedented C-C bond cleavage to be converted into glycine. After formation of the DKP, sulfur is incorporated into the DKP by conjugation with glutathione by aclG, followed by its stepwise degradation to the thiol by aclI, aclJ and aclK, and the dithiol oxidation by aclT. In addition, oxygenases (aclB, aclC, aclL and aclO) and O-methyltransferases (aclM and aclU) act as tailoring enzymes to produce the intermediate dechloroaspirochlorine. Ultimately, chlorination of dechloroaspirochlorine by the halogenase aclH is the last step in the aspirochlorine pathway. The protein is Aspirochlorine biosynthesis protein N of Aspergillus oryzae (strain ATCC 42149 / RIB 40) (Yellow koji mold).